Reading from the N-terminus, the 372-residue chain is Geranylgeranyl pyrophosphate synthase 4 (372 aa).

The first 22 residues, 1-22 (MEAQNIFLYLLIVFLSLHFVFT), serve as a signal peptide directing secretion. 3 residues coordinate isopentenyl diphosphate: Lys-121, Arg-124, and His-153. Positions 160 and 166 each coordinate Mg(2+). Position 171 (Arg-171) interacts with dimethylallyl diphosphate. Arg-172 lines the isopentenyl diphosphate pocket. Dimethylallyl diphosphate is bound by residues Lys-257, Thr-258, Gln-295, Lys-312, and Lys-322.

It belongs to the FPP/GGPP synthase family. Monomer. Requires Mg(2+) as cofactor. As to expression, faintly expressed in flowers. Expressed in roots and siliques.

It is found in the endoplasmic reticulum. The enzyme catalyses isopentenyl diphosphate + dimethylallyl diphosphate = (2E)-geranyl diphosphate + diphosphate. It catalyses the reaction isopentenyl diphosphate + (2E)-geranyl diphosphate = (2E,6E)-farnesyl diphosphate + diphosphate. It carries out the reaction isopentenyl diphosphate + (2E,6E)-farnesyl diphosphate = (2E,6E,10E)-geranylgeranyl diphosphate + diphosphate. The protein operates within isoprenoid biosynthesis; farnesyl diphosphate biosynthesis; farnesyl diphosphate from geranyl diphosphate and isopentenyl diphosphate: step 1/1. Its pathway is isoprenoid biosynthesis; geranyl diphosphate biosynthesis; geranyl diphosphate from dimethylallyl diphosphate and isopentenyl diphosphate: step 1/1. It participates in isoprenoid biosynthesis; geranylgeranyl diphosphate biosynthesis; geranylgeranyl diphosphate from farnesyl diphosphate and isopentenyl diphosphate: step 1/1. In terms of biological role, catalyzes the trans-addition of the three molecules of isopentenyl diphosphate (IPP) onto dimethylallyl diphosphate (DMAPP) to form geranylgeranyl diphosphate. In Arabidopsis thaliana (Mouse-ear cress), this protein is Geranylgeranyl pyrophosphate synthase 4.